A 90-amino-acid chain; its full sequence is Early nodulin-36A (90 aa).

The sequence is that of Early nodulin-36A from Glycine max (Soybean).